The following is a 116-amino-acid chain: Cocaine- and amphetamine-regulated transcript protein (116 aa).

Positions 1–27 (MESPRLRLLPLLGAALLLLLPLLGALA) are cleaved as a signal peptide. Residue Tyr-41 is modified to Phosphotyrosine. Ser-48 bears the Phosphoserine mark. Cystine bridges form between Cys-82–Cys-100, Cys-88–Cys-108, and Cys-102–Cys-115.

Belongs to the CART family.

It localises to the secreted. Its function is as follows. Satiety factor closely associated with the actions of leptin and neuropeptide y; this anorectic peptide inhibits both normal and starvation-induced feeding and completely blocks the feeding response induced by neuropeptide Y and regulated by leptin in the hypothalamus. This chain is Cocaine- and amphetamine-regulated transcript protein (CARTPT), found in Bos taurus (Bovine).